Consider the following 428-residue polypeptide: Cholecystokinin receptor type A (428 aa).

At 1–41 (MDVVDSLLVNGSNITPPCELGLENETLFCLDQPRPSKEWQP) the chain is on the extracellular side. N-linked (GlcNAc...) asparagine glycosylation is found at asparagine 10 and asparagine 24. Cysteine 18 and cysteine 29 are oxidised to a cystine. A helical transmembrane segment spans residues 42–67 (AVQILLYSLIFLLSVLGNTLVITVLI). Residues 68–77 (RNKRMRTVTN) are Cytoplasmic-facing. A helical membrane pass occupies residues 78 to 104 (IFLLSLAVSDLMLCLFCMPFNLIPNLL). Residues 105–115 (KDFIFGSAVCK) are Extracellular-facing. Cysteine 114 and cysteine 196 are oxidised to a cystine. A helical transmembrane segment spans residues 116-137 (TTTYFMGTSVSVSTFNLVAISL). Residues 138–157 (ERYGAICKPLQSRVWQTKSH) lie on the Cytoplasmic side of the membrane. Residues 158–178 (ALKVIAATWCLSFTIMTPYPI) form a helical membrane-spanning segment. Residues 179–210 (YSNLVPFTKNNNQTANMCRFLLPNDVMQQSWH) lie on the Extracellular side of the membrane. Residue asparagine 190 is glycosylated (N-linked (GlcNAc...) asparagine). A helical membrane pass occupies residues 211–234 (TFLLLILFLIPGIVMMVAYGLISL). Topologically, residues 235–313 (ELYQGIKFEA…NLMAKKRVIR (79 aa)) are cytoplasmic. Residues 248–272 (KSAKERKPSTTSSGKYEDSDGCYLQ) form a disordered region. Residues 314–334 (MLIVIVVLFFLCWMPIFSANA) form a helical membrane-spanning segment. Topologically, residues 335–349 (WRAYDTASAERRLSG) are extracellular. A helical membrane pass occupies residues 350 to 373 (TPISFILLLSYTSSCVNPIIYCFM). The Cytoplasmic portion of the chain corresponds to 374–428 (NKRFRLGFMATFPCCPNPGPPGARGEVGEEEEGGTTGASLSRFSYSHMSASVPPQ). The S-palmitoyl cysteine moiety is linked to residue cysteine 387. The tract at residues 394-428 (PGARGEVGEEEEGGTTGASLSRFSYSHMSASVPPQ) is disordered. Polar residues predominate over residues 411-422 (ASLSRFSYSHMS).

The protein belongs to the G-protein coupled receptor 1 family.

It localises to the cell membrane. Its function is as follows. Receptor for cholecystokinin. Mediates pancreatic growth and enzyme secretion, smooth muscle contraction of the gall bladder and stomach. Has a 1000-fold higher affinity for CCK rather than for gastrin. It modulates feeding and dopamine-induced behavior in the central and peripheral nervous system. This receptor mediates its action by association with G proteins that activate a phosphatidylinositol-calcium second messenger system. This is Cholecystokinin receptor type A (CCKAR) from Homo sapiens (Human).